The sequence spans 181 residues: Small ribosomal subunit protein uS4 (181 aa).

In terms of domain architecture, S4 RNA-binding spans 108–180 (RRLQTIVYRK…GERQRIMNQR (73 aa)).

Belongs to the universal ribosomal protein uS4 family. Part of the 30S ribosomal subunit. Contacts protein S5. The interaction surface between S4 and S5 is involved in control of translational fidelity.

Functionally, one of the primary rRNA binding proteins, it binds directly to 16S rRNA where it nucleates assembly of the body of the 30S subunit. With S5 and S12 plays an important role in translational accuracy. In Methanocorpusculum labreanum (strain ATCC 43576 / DSM 4855 / Z), this protein is Small ribosomal subunit protein uS4.